Consider the following 228-residue polypeptide: NAD(P)H-hydrate epimerase (228 aa).

The region spanning 9 to 209 is the YjeF N-terminal domain; the sequence is VRAVERLAHR…LLGLTPAFLA (201 aa). 53–57 is a (6S)-NADPHX binding site; the sequence is NNGGD. K(+)-binding residues include N54 and D115. (6S)-NADPHX contacts are provided by residues 119 to 125 and D148; that span reads GIGLARP. S151 contacts K(+).

This sequence belongs to the NnrE/AIBP family. K(+) serves as cofactor.

The catalysed reaction is (6R)-NADHX = (6S)-NADHX. It catalyses the reaction (6R)-NADPHX = (6S)-NADPHX. In terms of biological role, catalyzes the epimerization of the S- and R-forms of NAD(P)HX, a damaged form of NAD(P)H that is a result of enzymatic or heat-dependent hydration. This is a prerequisite for the S-specific NAD(P)H-hydrate dehydratase to allow the repair of both epimers of NAD(P)HX. The sequence is that of NAD(P)H-hydrate epimerase from Bordetella pertussis (strain CS).